The primary structure comprises 162 residues: Dihydrofolate reductase (162 aa).

The 159-residue stretch at 3–161 (KITLIAACAE…TRYAFVHYLR (159 aa)) folds into the DHFR domain. A substrate-binding site is contributed by 7–9 (IAA). NADP(+)-binding positions include 8 to 9 (AA) and 16 to 21 (IGAGNA). Asp29 is a binding site for substrate. 45 to 48 (GRKT) lines the NADP(+) pocket. Residue Arg60 participates in substrate binding. Residues 65-68 (ISRQ) and 98-103 (MGGAQI) each bind NADP(+). Thr117 is a binding site for substrate.

The protein belongs to the dihydrofolate reductase family.

It catalyses the reaction (6S)-5,6,7,8-tetrahydrofolate + NADP(+) = 7,8-dihydrofolate + NADPH + H(+). It functions in the pathway cofactor biosynthesis; tetrahydrofolate biosynthesis; 5,6,7,8-tetrahydrofolate from 7,8-dihydrofolate: step 1/1. Functionally, key enzyme in folate metabolism. Catalyzes an essential reaction for de novo glycine and purine synthesis, and for DNA precursor synthesis. This is Dihydrofolate reductase (folA) from Neisseria meningitidis serogroup B (strain ATCC BAA-335 / MC58).